Consider the following 37-residue polypeptide: Large ribosomal subunit protein bL36 (37 aa).

This sequence belongs to the bacterial ribosomal protein bL36 family.

The chain is Large ribosomal subunit protein bL36 from Methylibium petroleiphilum (strain ATCC BAA-1232 / LMG 22953 / PM1).